The sequence spans 130 residues: Anti-adapter protein IraD (130 aa).

It belongs to the GpW/Gp25 family. IraD subfamily. As to quaternary structure, interacts with RssB.

The protein localises to the cytoplasm. Its function is as follows. Inhibits RpoS proteolysis by regulating RssB activity, thereby increasing the stability of the sigma stress factor RpoS during oxidative stress. Its effect on RpoS stability is due to its interaction with RssB, which probably blocks the interaction of RssB with RpoS, and the consequent delivery of the RssB-RpoS complex to the ClpXP protein degradation pathway. This chain is Anti-adapter protein IraD, found in Escherichia coli O157:H7.